We begin with the raw amino-acid sequence, 826 residues long: Hyaluronate lyase HylA (826 aa).

Positions 1–36 (MFDIPYQVPSRRTFLSLSALSAIAIAASPEMPDAFA) form a signal peptide, tat-type signal. Active-site residues include His-276, Tyr-285, and Arg-339. The disordered stretch occupies residues 800 to 826 (LSPALPKPTKPSLRASSYPLGLPHTSS).

It belongs to the polysaccharide lyase 8 family. Predicted to be exported by the Tat system. The position of the signal peptide cleavage has not been experimentally proven.

The protein localises to the secreted. The enzyme catalyses [hyaluronan](n) = n 3-(4-deoxy-beta-D-gluc-4-enuronosyl)-N-acetyl-D-glucosamine + H2O. Its function is as follows. Degrades hyaluronic acid (HA) into large-sized HA oligosaccharides, including tetrasaccharide HA (HA-4), hexasaccharide HA (HA-6) and higher molecular weight HA, and to a lesser extent into HA disaccharides (HA-2). Involved in the pathogenesis of acne. HA degradation products induce secretion of proinflammatory cytokines (IL-6, IL-8 and TNF-alpha) from human HaCaT keratinocyte cell line and from mouse bone marrow derived macrophages (BMDMs). Produced HA fragments also direct robust TLR2-dependent inflammation in the mouse model of acne. This is Hyaluronate lyase HylA from Cutibacterium acnes (Propionibacterium acnes).